Reading from the N-terminus, the 515-residue chain is 2,3-bisphosphoglycerate-independent phosphoglycerate mutase (515 aa).

Mn(2+) is bound by residues D14 and S64. The active-site Phosphoserine intermediate is S64. Substrate-binding positions include H125, R155–D156, R187, R193, R263–R266, and K337. Residues D404, H408, D445, H446, and H464 each coordinate Mn(2+).

The protein belongs to the BPG-independent phosphoglycerate mutase family. Monomer. Mn(2+) is required as a cofactor.

The enzyme catalyses (2R)-2-phosphoglycerate = (2R)-3-phosphoglycerate. The protein operates within carbohydrate degradation; glycolysis; pyruvate from D-glyceraldehyde 3-phosphate: step 3/5. In terms of biological role, catalyzes the interconversion of 2-phosphoglycerate and 3-phosphoglycerate. In Pseudomonas aeruginosa (strain UCBPP-PA14), this protein is 2,3-bisphosphoglycerate-independent phosphoglycerate mutase.